The following is a 243-amino-acid chain: 1-(5-phosphoribosyl)-5-[(5-phosphoribosylamino)methylideneamino] imidazole-4-carboxamide isomerase (243 aa).

Aspartate 10 (proton acceptor) is an active-site residue. Aspartate 129 functions as the Proton donor in the catalytic mechanism.

Belongs to the HisA/HisF family.

It is found in the cytoplasm. It carries out the reaction 1-(5-phospho-beta-D-ribosyl)-5-[(5-phospho-beta-D-ribosylamino)methylideneamino]imidazole-4-carboxamide = 5-[(5-phospho-1-deoxy-D-ribulos-1-ylimino)methylamino]-1-(5-phospho-beta-D-ribosyl)imidazole-4-carboxamide. The protein operates within amino-acid biosynthesis; L-histidine biosynthesis; L-histidine from 5-phospho-alpha-D-ribose 1-diphosphate: step 4/9. This Saccharopolyspora erythraea (strain ATCC 11635 / DSM 40517 / JCM 4748 / NBRC 13426 / NCIMB 8594 / NRRL 2338) protein is 1-(5-phosphoribosyl)-5-[(5-phosphoribosylamino)methylideneamino] imidazole-4-carboxamide isomerase.